Reading from the N-terminus, the 752-residue chain is Translation initiation factor IF-2 (752 aa).

Over residues 148-159 (KKVKDKNKKEEP) the composition is skewed to basic and acidic residues. Residues 148 to 170 (KKVKDKNKKEEPAVTPSTAPRKK) form a disordered region. In terms of domain architecture, tr-type G spans 250–419 (PRPPIVTVMG…ALQAEIMELK (170 aa)). Positions 259–266 (GHVDHGKT) are G1. 259 to 266 (GHVDHGKT) contributes to the GTP binding site. Residues 284 to 288 (GITQH) form a G2 region. The tract at residues 305-308 (DTPG) is G3. Residues 305-309 (DTPGH) and 359-362 (NKID) contribute to the GTP site. The tract at residues 359–362 (NKID) is G4. Residues 395 to 397 (SAK) are G5.

This sequence belongs to the TRAFAC class translation factor GTPase superfamily. Classic translation factor GTPase family. IF-2 subfamily.

The protein resides in the cytoplasm. Functionally, one of the essential components for the initiation of protein synthesis. Protects formylmethionyl-tRNA from spontaneous hydrolysis and promotes its binding to the 30S ribosomal subunits. Also involved in the hydrolysis of GTP during the formation of the 70S ribosomal complex. The sequence is that of Translation initiation factor IF-2 from Thermodesulfovibrio yellowstonii (strain ATCC 51303 / DSM 11347 / YP87).